Here is a 192-residue protein sequence, read N- to C-terminus: GTP cyclohydrolase-2 (192 aa).

50–54 (RLHSE) contacts GTP. The Zn(2+) site is built by Cys55, Cys66, and Cys68. GTP-binding positions include 92–94 (EGR) and Thr114. Asp126 (proton acceptor) is an active-site residue. Arg128 acts as the Nucleophile in catalysis. GTP is bound by residues Thr149 and Lys154.

The protein belongs to the GTP cyclohydrolase II family. Zn(2+) serves as cofactor.

The catalysed reaction is GTP + 4 H2O = 2,5-diamino-6-hydroxy-4-(5-phosphoribosylamino)-pyrimidine + formate + 2 phosphate + 3 H(+). The protein operates within cofactor biosynthesis; riboflavin biosynthesis; 5-amino-6-(D-ribitylamino)uracil from GTP: step 1/4. Functionally, catalyzes the conversion of GTP to 2,5-diamino-6-ribosylamino-4(3H)-pyrimidinone 5'-phosphate (DARP), formate and pyrophosphate. In Helicobacter pylori (strain J99 / ATCC 700824) (Campylobacter pylori J99), this protein is GTP cyclohydrolase-2.